The chain runs to 557 residues: CCR4-NOT transcription complex subunit 6 (557 aa).

LRR repeat units lie at residues 52–73, 75–96, 98–120, and 121–143; these read HLTA…IAKL, NLVY…LGNM, SLRE…GKLF, and QLQT…CLEP. Residues 153–557 are nuclease domain; it reads LLDNLSGTAK…VNGIHLPGRR (405 aa). Glu-240 is a Mg(2+) binding site. Residues Glu-240, Glu-276, His-361, and Pro-366 each contribute to the substrate site. Asp-412 lines the Mg(2+) pocket. Asp-412 functions as the Proton donor/acceptor in the catalytic mechanism. 3 residues coordinate substrate: Asn-414, Asn-481, and Phe-486.

Belongs to the CCR4/nocturin family. Component of the CCR4-NOT complex; distinct complexes seem to exist that differ in the participation of probably mutually exclusive catalytic subunits; the complex contains two deadenylase subunits, CNOT6 or CNOT6L, and CNOT7 or CNOT8. Interacts with CNOT7 and CNOT8. Interacts with UNR. Interacts with ZFP36L1 (via N-terminus). Interacts with ZNF335. The cofactor is Mg(2+).

It localises to the cytoplasm. The protein localises to the nucleus. It catalyses the reaction Exonucleolytic cleavage of poly(A) to 5'-AMP.. Functionally, poly(A) nuclease with 3'-5' RNase activity. Catalytic component of the CCR4-NOT complex which is one of the major cellular mRNA deadenylases and is linked to various cellular processes including bulk mRNA degradation, miRNA-mediated repression, translational repression during translational initiation and general transcription regulation. Additional complex functions may be a consequence of its influence on mRNA expression. Involved in mRNA decay mediated by the major-protein-coding determinant of instability (mCRD) of the FOS gene in the cytoplasm. In the presence of ZNF335, enhances ligand-dependent transcriptional activity of nuclear hormone receptors. Mediates cell proliferation and cell survival and prevents cellular senescence. In Mus musculus (Mouse), this protein is CCR4-NOT transcription complex subunit 6 (Cnot6).